The chain runs to 266 residues: N-acetylneuraminate lyase B (266 aa).

Residues Thr51 and Thr52 each coordinate aceneuramate. Tyr143 serves as the catalytic Proton donor. Catalysis depends on Lys173, which acts as the Schiff-base intermediate with substrate. 5 residues coordinate aceneuramate: Ser175, Gly197, Asp199, Glu200, and Ser216.

This sequence belongs to the DapA family. NanA subfamily. In terms of assembly, homotetramer.

It is found in the cytoplasm. The enzyme catalyses aceneuramate = aldehydo-N-acetyl-D-mannosamine + pyruvate. The protein operates within amino-sugar metabolism; N-acetylneuraminate degradation. Functionally, catalyzes the cleavage of N-acetylneuraminic acid (sialic acid) to form pyruvate and N-acetylmannosamine via a Schiff base intermediate. It prevents sialic acids from being recycled and returning to the cell surface. Involved in the N-glycolylneuraminic acid (Neu5Gc) degradation pathway. The sequence is that of N-acetylneuraminate lyase B (npl-b) from Xenopus laevis (African clawed frog).